The chain runs to 754 residues: 5-methyltetrahydropteroyltriglutamate--homocysteine methyltransferase (754 aa).

Residues 17 to 20 (RELK) and Lys-117 each bind 5-methyltetrahydropteroyltri-L-glutamate. Residues 431 to 433 (IGS) and Glu-484 each bind L-homocysteine. L-methionine-binding positions include 431-433 (IGS) and Glu-484. 5-methyltetrahydropteroyltri-L-glutamate-binding positions include 515 to 516 (RC) and Trp-561. Asp-599 provides a ligand contact to L-homocysteine. An L-methionine-binding site is contributed by Asp-599. Glu-605 is a binding site for 5-methyltetrahydropteroyltri-L-glutamate. Zn(2+)-binding residues include His-641, Cys-643, and Glu-665. His-694 functions as the Proton donor in the catalytic mechanism. A Zn(2+)-binding site is contributed by Cys-726.

The protein belongs to the vitamin-B12 independent methionine synthase family. It depends on Zn(2+) as a cofactor.

The catalysed reaction is 5-methyltetrahydropteroyltri-L-glutamate + L-homocysteine = tetrahydropteroyltri-L-glutamate + L-methionine. Its pathway is amino-acid biosynthesis; L-methionine biosynthesis via de novo pathway; L-methionine from L-homocysteine (MetE route): step 1/1. Functionally, catalyzes the transfer of a methyl group from 5-methyltetrahydrofolate to homocysteine resulting in methionine formation. This is 5-methyltetrahydropteroyltriglutamate--homocysteine methyltransferase from Salmonella enteritidis PT4 (strain P125109).